The sequence spans 759 residues: Phosphoribosylformylglycinamidine synthase subunit PurL (759 aa).

The active site involves H61. The ATP site is built by Y64 and K105. E107 contributes to the Mg(2+) binding site. Substrate-binding positions include 108–111 (SHNH) and R130. H109 (proton acceptor) is an active-site residue. D131 provides a ligand contact to Mg(2+). Position 260 (Q260) interacts with substrate. D288 lines the Mg(2+) pocket. A substrate-binding site is contributed by 332 to 334 (ESQ). Residues D520 and G557 each contribute to the ATP site. N558 contacts Mg(2+). S560 lines the substrate pocket.

This sequence belongs to the FGAMS family. Monomer. Part of the FGAM synthase complex composed of 1 PurL, 1 PurQ and 2 PurS subunits.

It is found in the cytoplasm. It carries out the reaction N(2)-formyl-N(1)-(5-phospho-beta-D-ribosyl)glycinamide + L-glutamine + ATP + H2O = 2-formamido-N(1)-(5-O-phospho-beta-D-ribosyl)acetamidine + L-glutamate + ADP + phosphate + H(+). Its pathway is purine metabolism; IMP biosynthesis via de novo pathway; 5-amino-1-(5-phospho-D-ribosyl)imidazole from N(2)-formyl-N(1)-(5-phospho-D-ribosyl)glycinamide: step 1/2. In terms of biological role, part of the phosphoribosylformylglycinamidine synthase complex involved in the purines biosynthetic pathway. Catalyzes the ATP-dependent conversion of formylglycinamide ribonucleotide (FGAR) and glutamine to yield formylglycinamidine ribonucleotide (FGAM) and glutamate. The FGAM synthase complex is composed of three subunits. PurQ produces an ammonia molecule by converting glutamine to glutamate. PurL transfers the ammonia molecule to FGAR to form FGAM in an ATP-dependent manner. PurS interacts with PurQ and PurL and is thought to assist in the transfer of the ammonia molecule from PurQ to PurL. The protein is Phosphoribosylformylglycinamidine synthase subunit PurL of Thermoplasma volcanium (strain ATCC 51530 / DSM 4299 / JCM 9571 / NBRC 15438 / GSS1).